A 155-amino-acid chain; its full sequence is uncharacterized protein (155 aa).

Positions 1-155 (MIVKYIKGDI…IVIVDWEPLL (155 aa)) constitute a Macro domain.

This is an uncharacterized protein from Escherichia coli (Bacteriophage T4).